We begin with the raw amino-acid sequence, 86 residues long: Large ribosomal subunit protein bL27 (86 aa).

The disordered stretch occupies residues 1-24 (MAHKKAGGSSRNGRDSEGRRLGVK).

This sequence belongs to the bacterial ribosomal protein bL27 family.

The chain is Large ribosomal subunit protein bL27 from Magnetococcus marinus (strain ATCC BAA-1437 / JCM 17883 / MC-1).